The following is a 219-amino-acid chain: ER lumen protein-retaining receptor (219 aa).

Topologically, residues 1–5 are lumenal; that stretch reads MNPFR. Residues 6–26 form a helical membrane-spanning segment; it reads ILGDLSHLTSILILIHNIKTT. Topologically, residues 27–37 are cytoplasmic; the sequence is RYIEGISFKTQ. 2 helical membrane passes run 38 to 58 and 59 to 79; these read TLYA…HWVS and LYNA…VVLL. Over 80–98 the chain is Cytoplasmic; sequence QGSKRTNTIAYNEMLMHDT. Residues 99 to 116 form a helical membrane-spanning segment; the sequence is FKIQHLLIGSALMSVFFH. Residues 117 to 118 are Lumenal-facing; sequence HK. The helical transmembrane segment at 119–139 threads the bilayer; the sequence is FTFLELAWSFSVWLESVAILP. At 140 to 152 the chain is on the cytoplasmic side; that stretch reads QLYMLSKGGKTRS. The helical transmembrane segment at 153-173 threads the bilayer; sequence LTVHYIFAMGLYRALYIPNWI. The Lumenal segment spans residues 174–185; it reads WRYSTEDKKLDK. A helical transmembrane segment spans residues 186–206; it reads IAFFAGLLQTLLYSDFFYIYY. Topologically, residues 207-219 are cytoplasmic; it reads TKVIRGKGFKLPK.

It belongs to the ERD2 family.

The protein localises to the endoplasmic reticulum membrane. Required for the retention of luminal endoplasmic reticulum proteins. Determines the specificity of the luminal ER protein retention system. Also required for normal vesicular traffic through the Golgi. This receptor strongly recognizes H-D-E-L and weakly recognizes D-D-E-L and K-D-E-L. The chain is ER lumen protein-retaining receptor from Saccharomyces cerevisiae (strain ATCC 204508 / S288c) (Baker's yeast).